The following is a 91-amino-acid chain: UPF0213 protein NGO_1598 (91 aa).

Positions 4–83 (SNWSVYLILC…AAQKRQLWEQ (80 aa)) constitute a GIY-YIG domain.

It belongs to the UPF0213 family.

The protein is UPF0213 protein NGO_1598 of Neisseria gonorrhoeae (strain ATCC 700825 / FA 1090).